The chain runs to 241 residues: Uridylate kinase (241 aa).

9-10 provides a ligand contact to ATP; the sequence is GS. Gly44 serves as a coordination point for UMP. Residues Gly45 and Arg49 each coordinate ATP. UMP contacts are provided by residues Asp66 and 114 to 120; that span reads VTPGQTT. Thr140, Tyr146, and Asp149 together coordinate ATP. The interval 222-241 is disordered; it reads TDVIPTGSEEPIYWTGSSDA.

This sequence belongs to the UMP kinase family. As to quaternary structure, homohexamer.

The protein localises to the cytoplasm. The enzyme catalyses UMP + ATP = UDP + ADP. It participates in pyrimidine metabolism; CTP biosynthesis via de novo pathway; UDP from UMP (UMPK route): step 1/1. With respect to regulation, inhibited by UTP. Functionally, catalyzes the reversible phosphorylation of UMP to UDP. The protein is Uridylate kinase of Halorubrum lacusprofundi (strain ATCC 49239 / DSM 5036 / JCM 8891 / ACAM 34).